Here is a 137-residue protein sequence, read N- to C-terminus: Cytochrome c2 (137 aa).

A signal peptide spans 1–21 (MKISLTAATVAALVLAAPAFA). Cysteine 34, cysteine 37, histidine 38, and methionine 117 together coordinate heme c.

This sequence belongs to the cytochrome c family. Post-translationally, binds 1 heme c group covalently per subunit.

In terms of biological role, cytochrome c2 is found mainly in purple, non-sulfur, photosynthetic bacteria where it functions as the electron donor to the oxidized bacteriochlorophyll in the photophosphorylation pathway. However, it may also have a role in the respiratory chain and is found in some non-photosynthetic bacteria. The polypeptide is Cytochrome c2 (cycA) (Rhodobacter capsulatus (strain ATCC BAA-309 / NBRC 16581 / SB1003)).